Here is a 245-residue protein sequence, read N- to C-terminus: NAD(P)H-quinone oxidoreductase subunit K (245 aa).

Positions 58, 59, 123, and 154 each coordinate [4Fe-4S] cluster. Residues Ser-210–Gly-245 form a disordered region. The span at Lys-236–Gly-245 shows a compositional bias: basic and acidic residues.

It belongs to the complex I 20 kDa subunit family. In terms of assembly, NDH-1 can be composed of about 15 different subunits; different subcomplexes with different compositions have been identified which probably have different functions. [4Fe-4S] cluster serves as cofactor.

It localises to the cellular thylakoid membrane. It catalyses the reaction a plastoquinone + NADH + (n+1) H(+)(in) = a plastoquinol + NAD(+) + n H(+)(out). The catalysed reaction is a plastoquinone + NADPH + (n+1) H(+)(in) = a plastoquinol + NADP(+) + n H(+)(out). Functionally, NDH-1 shuttles electrons from an unknown electron donor, via FMN and iron-sulfur (Fe-S) centers, to quinones in the respiratory and/or the photosynthetic chain. The immediate electron acceptor for the enzyme in this species is believed to be plastoquinone. Couples the redox reaction to proton translocation, and thus conserves the redox energy in a proton gradient. Cyanobacterial NDH-1 also plays a role in inorganic carbon-concentration. The protein is NAD(P)H-quinone oxidoreductase subunit K of Nostoc punctiforme (strain ATCC 29133 / PCC 73102).